Here is a 397-residue protein sequence, read N- to C-terminus: Nuclear RNA export factor 5 (397 aa).

The RRM domain occupies 13–92; it reads WFKVTIPYGI…IFVSHFTAPY (80 aa). LRR repeat units follow at residues 160 to 185, 186 to 209, 210 to 237, and 238 to 265; these read ELLS…EKAP, KVKT…VKGL, KLEE…AIRD, and CFPK…ETMK. Residues 280 to 367 enclose the NTF2; truncated domain; sequence LVLQFLQQSN…ESQRWWCLLS (88 aa).

Belongs to the NXF family. As to quaternary structure, interacts with NXT1 and NXT2.

The protein localises to the cytoplasm. It localises to the nucleus. Functionally, could be involved in the export of mRNA from the nucleus to the cytoplasm. Could also have a role in polarized cytoplasmic transport and localization of mRNA in neurons. The polypeptide is Nuclear RNA export factor 5 (NXF5) (Homo sapiens (Human)).